We begin with the raw amino-acid sequence, 396 residues long: Elongation factor Tu (396 aa).

In terms of domain architecture, tr-type G spans 10-205 (KEHVNIGTIG…AVDNYIETPV (196 aa)). A G1 region spans residues 19 to 26 (GHVDHGKT). Residue 19 to 26 (GHVDHGKT) coordinates GTP. T26 serves as a coordination point for Mg(2+). Positions 60–64 (GITIN) are G2. Residues 81–84 (DCPG) are G3. GTP is bound by residues 81–85 (DCPGH) and 136–139 (NKVD). The tract at residues 136-139 (NKVD) is G4. Positions 175–177 (SAL) are G5.

It belongs to the TRAFAC class translation factor GTPase superfamily. Classic translation factor GTPase family. EF-Tu/EF-1A subfamily. In terms of assembly, monomer.

The protein localises to the cytoplasm. It carries out the reaction GTP + H2O = GDP + phosphate + H(+). GTP hydrolase that promotes the GTP-dependent binding of aminoacyl-tRNA to the A-site of ribosomes during protein biosynthesis. The protein is Elongation factor Tu of Mycoplasmopsis pulmonis (strain UAB CTIP) (Mycoplasma pulmonis).